The chain runs to 321 residues: Ribosomal protein L11 methyltransferase (321 aa).

S-adenosyl-L-methionine is bound by residues T150, G171, D193, and N256.

This sequence belongs to the methyltransferase superfamily. PrmA family.

It is found in the cytoplasm. The enzyme catalyses L-lysyl-[protein] + 3 S-adenosyl-L-methionine = N(6),N(6),N(6)-trimethyl-L-lysyl-[protein] + 3 S-adenosyl-L-homocysteine + 3 H(+). In terms of biological role, methylates ribosomal protein L11. The polypeptide is Ribosomal protein L11 methyltransferase (Herpetosiphon aurantiacus (strain ATCC 23779 / DSM 785 / 114-95)).